A 375-amino-acid polypeptide reads, in one-letter code: Alcohol dehydrogenase class-3 chain H (375 aa).

A1 is subject to N-acetylalanine. Positions 46, 68, 98, 101, 104, 112, and 175 each coordinate Zn(2+).

This sequence belongs to the zinc-containing alcohol dehydrogenase family. Class-III subfamily. In terms of assembly, homodimer or heterodimer with L chain. The cofactor is Zn(2+).

The protein resides in the cytoplasm. The catalysed reaction is a primary alcohol + NAD(+) = an aldehyde + NADH + H(+). It carries out the reaction a secondary alcohol + NAD(+) = a ketone + NADH + H(+). It catalyses the reaction S-(hydroxymethyl)glutathione + NADP(+) = S-formylglutathione + NADPH + H(+). The enzyme catalyses S-(hydroxymethyl)glutathione + NAD(+) = S-formylglutathione + NADH + H(+). In terms of biological role, class-III ADH is remarkably ineffective in oxidizing ethanol, but it readily catalyzes the oxidation of long-chain primary alcohols and the oxidation of S-(hydroxymethyl) glutathione. In Gadus morhua (Atlantic cod), this protein is Alcohol dehydrogenase class-3 chain H.